A 181-amino-acid chain; its full sequence is Translationally-controlled tumor protein homolog (181 aa).

Residues 1 to 181 form the TCTP domain; the sequence is MLIYKDIFTD…VKEAIIEEKC (181 aa).

It belongs to the TCTP family.

It localises to the cytoplasm. Functionally, involved in calcium binding and microtubule stabilization. This is Translationally-controlled tumor protein homolog (tct-1) from Caenorhabditis elegans.